The sequence spans 1512 residues: ATP-dependent permease YOR1 (1512 aa).

Positions 1-68 (MSPLLPTHWG…KGMKETEDGG (68 aa)) are disordered. Over residues 13-29 (APQNEPTLPSPSHSVST) the composition is skewed to polar residues. Residues 31 to 65 (VGDEEKLRRSEGSDGEDRINLDSNKYDVKGMKETE) show a composition bias toward basic and acidic residues. 5 consecutive transmembrane segments (helical) span residues 229-249 (ASLA…AGFI), 288-308 (GPGI…SLGM), 363-385 (FAAG…IIIL), 475-495 (GMTA…FITY), and 507-527 (IFTV…WPMT). Residues 246–533 (AGFIKVFGDT…WPMTLSSTAD (288 aa)) enclose the ABC transmembrane type-1 1 domain. A disordered region spans residues 594-656 (VLNGGKPGGP…SAPGIDEEIS (63 aa)). A compositionally biased stretch (low complexity) spans 619–643 (AEEIQAETAAGQPGAGEASAEGQGQ). The 221-residue stretch at 651–871 (IDEEISEKKE…NGAFAKLIKE (221 aa)) folds into the ABC transporter 1 domain. 683 to 690 (GAIGSGKS) is a binding site for ATP. A run of 4 helical transmembrane segments spans residues 937-957 (GVFM…FYVI), 974-994 (NGFY…ALFF), 1067-1087 (VILL…VSLL), and 1167-1187 (FLGS…SSVS). The ABC transmembrane type-1 2 domain maps to 943 to 1217 (LLFFCIVVAQ…LVRQIAEVEN (275 aa)). The ABC transporter 2 domain maps to 1255 to 1496 (IEFKDVRMRY…GGIFTEMCSK (242 aa)). 1289–1296 (GRTGAGKS) contacts ATP.

Belongs to the ABC transporter superfamily. ABCC family. Conjugate transporter (TC 3.A.1.208) subfamily.

It localises to the extracellular vesicle membrane. The protein localises to the secreted. Transmembrane transporter. May play a role in the packaging or formation of extracellular vesicles (EVs), and in the export of virulence factors from EVs. Required for efficient non-lytic exocytosis from host macrophages, the process by which the yeast escapes host macrophages with both host cell and pathogen remaining viable. This Cryptococcus neoformans var. grubii serotype A (strain H99 / ATCC 208821 / CBS 10515 / FGSC 9487) (Filobasidiella neoformans var. grubii) protein is ATP-dependent permease YOR1.